Reading from the N-terminus, the 1252-residue chain is Myosin-3 (1252 aa).

Residues 36–715 (VGVSDLTLLS…TLFALENMRD (680 aa)) form the Myosin motor domain. ATP is bound at residue 129–136 (GESGAGKT). Residue serine 357 is modified to Phosphoserine. The actin-binding stretch occupies residues 404–486 (SIGILDIYGF…PGIFAAMNDA (83 aa)). IQ domains are found at residues 719–739 (YNMA…RIDA) and 740–767 (AIRI…AGDK). The TH1 domain maps to 773-963 (KERRNMSLLG…TILVRHGNPP (191 aa)). 3 disordered regions span residues 988 to 1086 (KTMK…KTSV), 1106 to 1136 (YSLP…PSEL), and 1203 to 1252 (INEP…DDDW). A compositionally biased stretch (low complexity) spans 997 to 1016 (KRTPQALPTSSLAASAAQAA). Polar residues-rich tracts occupy residues 1050-1063 (PVRN…NSKV), 1106-1121 (YSLP…TDSY), and 1203-1219 (INEP…NTDL). The SH3 domain maps to 1116-1178 (SQTDSYQAAY…PTSYIVKYNG (63 aa)). Over residues 1238–1252 (SEEDISREEDDDDDW) the composition is skewed to acidic residues.

This sequence belongs to the TRAFAC class myosin-kinesin ATPase superfamily. Myosin family. In terms of processing, phosphorylation of the TEDS site (Ser-357) is required for the polarization of the actin cytoskeleton. Phosphorylation probably activates the myosin-I ATPase activity.

It is found in the cytoplasm. It localises to the cytoskeleton. The protein resides in the actin patch. Functionally, type-I myosin implicated in the organization of the actin cytoskeleton. Required for proper actin cytoskeleton polarization. At the cell cortex, assembles in patch-like structures together with proteins from the actin-polymerizing machinery and promotes actin assembly. Functions as actin nucleation-promoting factor (NPF) for the Arp2/3 complex. The chain is Myosin-3 (MYO3) from Candida glabrata (strain ATCC 2001 / BCRC 20586 / JCM 3761 / NBRC 0622 / NRRL Y-65 / CBS 138) (Yeast).